Here is a 356-residue protein sequence, read N- to C-terminus: tRNA-specific 2-thiouridylase MnmA 1 (356 aa).

ATP-binding positions include 8-15 (GMSGGVDS) and M34. C103 acts as the Nucleophile in catalysis. C103 and C199 form a disulfide bridge. G127 serves as a coordination point for ATP. The segment at 149-151 (KDQ) is interaction with tRNA. The active-site Cysteine persulfide intermediate is the C199. Residues 305–306 (RY) form an interaction with tRNA region.

Belongs to the MnmA/TRMU family.

Its subcellular location is the cytoplasm. The catalysed reaction is S-sulfanyl-L-cysteinyl-[protein] + uridine(34) in tRNA + AH2 + ATP = 2-thiouridine(34) in tRNA + L-cysteinyl-[protein] + A + AMP + diphosphate + H(+). In terms of biological role, catalyzes the 2-thiolation of uridine at the wobble position (U34) of tRNA, leading to the formation of s(2)U34. This Clostridium botulinum (strain ATCC 19397 / Type A) protein is tRNA-specific 2-thiouridylase MnmA 1.